The chain runs to 122 residues: Large ribosomal subunit protein uL14 (122 aa).

This sequence belongs to the universal ribosomal protein uL14 family. Part of the 50S ribosomal subunit. Forms a cluster with proteins L3 and L19. In the 70S ribosome, L14 and L19 interact and together make contacts with the 16S rRNA in bridges B5 and B8.

Its function is as follows. Binds to 23S rRNA. Forms part of two intersubunit bridges in the 70S ribosome. This is Large ribosomal subunit protein uL14 from Borreliella afzelii (strain PKo) (Borrelia afzelii).